A 382-amino-acid chain; its full sequence is Acetyltransferase eriL (382 aa).

A run of 6 helical transmembrane segments spans residues 5–25 (LQPL…LGAV), 33–53 (ALLF…TTTG), 59–79 (IVTW…LLIN), 146–166 (TLFY…SPVF), 192–212 (LWSY…ALGV), and 335–355 (GYMW…DPQF).

Belongs to the wax synthase family.

It is found in the membrane. It catalyses the reaction cyathatriol + acetyl-CoA = 11-O-acetylcyathatriol + CoA. The catalysed reaction is cyathin A3 + acetyl-CoA = 11-O-acetylcyathin A3 + CoA. It functions in the pathway secondary metabolite biosynthesis. Acetyltransferase; part of the gene cluster that mediates the biosynthesis of erinacines, cyathane-xylosides that show unique biological activities, including leishmanicidal activity, stimulating activity for nerve growth-factor synthesis, and agonistic activity toward the kappa opioid receptor. Within the pathway, eriL converts cyathatriol into 11-O-acetyl-cyathatriol. EriL is also able to acetylate cyathin A3 to produce 11-O-acetylcyathin A3. The first step of the erinacines biosynthesis pathway is catalyzed by the geranylgeranyl diphosphate (GGPP) synthase eriE via conversion of farnesyl pyrophosphate and isopentyl pyrophosphate into geranylgeranyl pyrophosphate (GGPP). GGPP is then substrate of the diterpene cyclase eriG for the production of cyatha-3,12-diene. The cytochrome P450 monooxygenase eriI then hydroxylates cyatha-3,12-diene at C-14 of the seven-membered ring to produce erinacol, which is further hydroxylated at C-15 by the cytochrome P450 monooxygenase eriC to yield cyathadiol. The cytochrome P450 monooxygenase eriA then catalyzes C-11 hydroxylation in the presence of the short chain dehydrogenase/reductase (SDR) eriH, which leads to the production of cyathatriol. The acetyltransferase eriL converts cyathatriol into 11-O-acetyl-cyathatriol. The SDR eriH catalyzes further oxidation of 11-O-acetyl-cyathatriol into 1-O-acetylcyathin A3. Finally, the glycosyl transferase eriJ tranfers xylose from UDP-xylose onto C-14 of 11-O-acetyl-cyathatriol to form eracine Q. EriJ is also able to convert 11-O-acetyl-cyathatriol to eracine Q2 by using UDP-D-glucose as cosubstrate, but at a lower rate. This chain is Acetyltransferase eriL, found in Hericium erinaceus (Lion's mane mushroom).